The following is a 209-amino-acid chain: Peptide deformylase 2 (209 aa).

Residues Cys101 and His149 each coordinate Fe cation. Glu150 is a catalytic residue. His153 serves as a coordination point for Fe cation.

The protein belongs to the polypeptide deformylase family. Fe(2+) is required as a cofactor.

It carries out the reaction N-terminal N-formyl-L-methionyl-[peptide] + H2O = N-terminal L-methionyl-[peptide] + formate. Removes the formyl group from the N-terminal Met of newly synthesized proteins. Requires at least a dipeptide for an efficient rate of reaction. N-terminal L-methionine is a prerequisite for activity but the enzyme has broad specificity at other positions. This Coxiella burnetii (strain RSA 493 / Nine Mile phase I) protein is Peptide deformylase 2.